The chain runs to 286 residues: Phosphoribosylaminoimidazole-succinocarboxamide synthase (286 aa).

The protein belongs to the SAICAR synthetase family.

It catalyses the reaction 5-amino-1-(5-phospho-D-ribosyl)imidazole-4-carboxylate + L-aspartate + ATP = (2S)-2-[5-amino-1-(5-phospho-beta-D-ribosyl)imidazole-4-carboxamido]succinate + ADP + phosphate + 2 H(+). Its pathway is purine metabolism; IMP biosynthesis via de novo pathway; 5-amino-1-(5-phospho-D-ribosyl)imidazole-4-carboxamide from 5-amino-1-(5-phospho-D-ribosyl)imidazole-4-carboxylate: step 1/2. The chain is Phosphoribosylaminoimidazole-succinocarboxamide synthase from Mannheimia succiniciproducens (strain KCTC 0769BP / MBEL55E).